The chain runs to 562 residues: Furostanol glycoside 26-O-beta-glucosidase (562 aa).

The transit peptide at 1 to 44 directs the protein to the chloroplast; that stretch reads MAAQLGLPLVSCHRGASQAASSSAHLVPGASAIMQAGNRRQKMR. A beta-D-glucoside is bound by residues glutamine 110, histidine 214, and 259 to 260; that span reads NE. Residue glutamate 260 is the Proton donor of the active site. Cysteine 279 and cysteine 285 are disulfide-bonded. A beta-D-glucoside contacts are provided by residues tyrosine 401, glutamate 472, tryptophan 518, 525 to 526, and phenylalanine 534; that span reads EW. Glutamate 472 functions as the Nucleophile in the catalytic mechanism.

It belongs to the glycosyl hydrolase 1 family. As to quaternary structure, heterodimer. The N-terminus of the larger subunit is blocked and the smaller subunit might be derived from the larger one.

It localises to the plastid. Its subcellular location is the chloroplast. It catalyses the reaction protodioscin + H2O = 26-deglucoprotodioscin + D-glucose. With respect to regulation, partially inhibited by glucono-1,5-lactone, conduritol beta-epoxide and diosgenin, but not by beta-sitosterol or cholesterol. Functionally, beta-glucosidase involved in saponin metabolism. Highly specific for the cleavage of C-26-bound glucose moiety of furostanol glycosides such as protogracillin and protodioscin. No activity with nuatigenin glycoside. Convers furostanol glycosides to spirostanol glycosides. The sequence is that of Furostanol glycoside 26-O-beta-glucosidase from Hellenia speciosa (Crepe ginger).